The primary structure comprises 256 residues: Pyridoxine 5'-phosphate synthase (256 aa).

Asparagine 10 lines the 3-amino-2-oxopropyl phosphate pocket. Aspartate 12–histidine 13 contacts 1-deoxy-D-xylulose 5-phosphate. Arginine 21 is a 3-amino-2-oxopropyl phosphate binding site. The active-site Proton acceptor is the histidine 46. 2 residues coordinate 1-deoxy-D-xylulose 5-phosphate: arginine 48 and histidine 53. The active-site Proton acceptor is the glutamate 73. A 1-deoxy-D-xylulose 5-phosphate-binding site is contributed by threonine 103. Residue histidine 193 is the Proton donor of the active site. 3-amino-2-oxopropyl phosphate contacts are provided by residues glycine 194 and glycine 215 to histidine 216.

This sequence belongs to the PNP synthase family. In terms of assembly, homooctamer; tetramer of dimers.

The protein localises to the cytoplasm. It catalyses the reaction 3-amino-2-oxopropyl phosphate + 1-deoxy-D-xylulose 5-phosphate = pyridoxine 5'-phosphate + phosphate + 2 H2O + H(+). Its pathway is cofactor biosynthesis; pyridoxine 5'-phosphate biosynthesis; pyridoxine 5'-phosphate from D-erythrose 4-phosphate: step 5/5. Functionally, catalyzes the complicated ring closure reaction between the two acyclic compounds 1-deoxy-D-xylulose-5-phosphate (DXP) and 3-amino-2-oxopropyl phosphate (1-amino-acetone-3-phosphate or AAP) to form pyridoxine 5'-phosphate (PNP) and inorganic phosphate. This is Pyridoxine 5'-phosphate synthase from Zymomonas mobilis subsp. mobilis (strain ATCC 31821 / ZM4 / CP4).